Reading from the N-terminus, the 182-residue chain is Orotate phosphoribosyltransferase (182 aa).

5-phospho-alpha-D-ribose 1-diphosphate is bound by residues arginine 96, lysine 97, lysine 100, histidine 102, and 122–130 (EDTSTTGGS). The orotate site is built by threonine 126 and arginine 154.

Belongs to the purine/pyrimidine phosphoribosyltransferase family. PyrE subfamily. In terms of assembly, homodimer. Mg(2+) is required as a cofactor.

It catalyses the reaction orotidine 5'-phosphate + diphosphate = orotate + 5-phospho-alpha-D-ribose 1-diphosphate. The protein operates within pyrimidine metabolism; UMP biosynthesis via de novo pathway; UMP from orotate: step 1/2. Functionally, catalyzes the transfer of a ribosyl phosphate group from 5-phosphoribose 1-diphosphate to orotate, leading to the formation of orotidine monophosphate (OMP). This Streptomyces avermitilis (strain ATCC 31267 / DSM 46492 / JCM 5070 / NBRC 14893 / NCIMB 12804 / NRRL 8165 / MA-4680) protein is Orotate phosphoribosyltransferase.